Reading from the N-terminus, the 1711-residue chain is Hybrid PKS-NRPS synthetase TAS1 (1711 aa).

Positions 43–397 (APLSKMQRAL…RNGLNSEHRV (355 aa)) are condensation (C) domain. Residues 506-907 (QQQATLRPEQ…TVLLYGRINN (402 aa)) are adenylation (A) domain. A Carrier 1 domain is found at 1043-1119 (LEWAAAKARI…SQVGLVQSRR (77 aa)). Position 1079 is an O-(pantetheine 4'-phosphoryl)serine (Ser-1079). The span at 1114-1127 (LVQSRRGSSGSPRT) shows a compositional bias: polar residues. Residues 1114 to 1159 (LVQSRRGSSGSPRTVRSHARPQRKAKTPPRQARPETPESDYDQLPD) form a disordered region. Residues 1128–1140 (VRSHARPQRKAKT) show a composition bias toward basic residues. The region spanning 1159–1236 (DLRDDVQQSI…AQVELLGRFT (78 aa)) is the Carrier 2 domain. An O-(pantetheine 4'-phosphoryl)serine modification is found at Ser-1195. In terms of domain architecture, Ketosynthase family 3 (KS3) spans 1266 to 1683 (REQYAIVGMS…GSTAHVVLSA (418 aa)). Residues Cys-1429, His-1565, and Asn-1608 each act as for beta-ketoacyl synthase activity in the active site.

It in the N-terminal section; belongs to the NRP synthetase family. Pantetheine 4'-phosphate is required as a cofactor.

It catalyses the reaction acetoacetyl-CoA + L-isoleucine + ATP = tenuazonic acid + AMP + diphosphate + CoA + 2 H(+). In terms of biological role, hybrid PKS-NRPS synthetase that mediates the biosynthesis of the toxin tenuazonic acid (TeA), an inhibitor of protein biosynthesis on ribosomes by suppressing the release of new protein. TAS1 alone is sufficient for TeA synthesis via the condensation of isoleucine (Ile) with acetoacetyl-CoA by the N-terminal NRPS module and subsequent cyclization conducted by the C-terminal KS domain. The polypeptide is Hybrid PKS-NRPS synthetase TAS1 (Botryobasidium botryosum (strain FD-172 SS1)).